Here is an 81-residue protein sequence, read N- to C-terminus: Short neurotoxin 1 (81 aa).

The signal sequence occupies residues 1 to 21 (MKTLLLSPVVVTIVCLDLGYT). Disulfide bonds link cysteine 24–cysteine 43, cysteine 38–cysteine 60, cysteine 62–cysteine 73, and cysteine 74–cysteine 79.

It belongs to the three-finger toxin family. Short-chain subfamily. Type I alpha-neurotoxin sub-subfamily. In terms of tissue distribution, expressed by the venom gland.

The protein resides in the secreted. Functionally, binds to muscle nicotinic acetylcholine receptor (nAChR) and inhibit acetylcholine from binding to the receptor, thereby impairing neuromuscular transmission. The protein is Short neurotoxin 1 of Hydrophis peronii (Spiny-headed seasnake).